The primary structure comprises 267 residues: Actin maturation protease (267 aa).

Residues 1-32 are disordered; that stretch reads MSNISSVAPPPPPPPMIVTPSTPATTKERPVG. Residues 8-17 are compositionally biased toward pro residues; sequence APPPPPPPMI. A peptidase C39-like region spans residues 74 to 188; sequence SIVQVGPTCG…WALIVGYLVD (115 aa). Residue C82 is part of the active site.

The protein belongs to the ACTMAP family.

The enzyme catalyses N-terminal N(alpha)-acetyl-L-cysteinyl-L-aspartyl-[protein] + H2O = N-terminal L-aspartyl-[protein] + N-acetyl-L-cysteine. Actin maturation protease that specifically mediates the cleavage of immature acetylated N-terminal actin, thereby contributing to actin maturation. In Drosophila melanogaster (Fruit fly), this protein is Actin maturation protease.